The following is a 337-amino-acid chain: Phosphate acyltransferase (337 aa).

The protein belongs to the PlsX family. In terms of assembly, homodimer. Probably interacts with PlsY.

The protein resides in the cytoplasm. The enzyme catalyses a fatty acyl-[ACP] + phosphate = an acyl phosphate + holo-[ACP]. It functions in the pathway lipid metabolism; phospholipid metabolism. Its function is as follows. Catalyzes the reversible formation of acyl-phosphate (acyl-PO(4)) from acyl-[acyl-carrier-protein] (acyl-ACP). This enzyme utilizes acyl-ACP as fatty acyl donor, but not acyl-CoA. This chain is Phosphate acyltransferase, found in Halalkalibacterium halodurans (strain ATCC BAA-125 / DSM 18197 / FERM 7344 / JCM 9153 / C-125) (Bacillus halodurans).